Reading from the N-terminus, the 381-residue chain is Chymosin (381 aa).

Positions methionine 1–glycine 16 are cleaved as a signal peptide. The propeptide at alanine 17–phenylalanine 58 is activation peptide. In terms of domain architecture, Peptidase A1 spans tyrosine 74–alanine 378. Residue aspartate 92 is part of the active site. Disulfide bonds link cysteine 105–cysteine 110 and cysteine 265–cysteine 269. Residue aspartate 274 is part of the active site. A disulfide bridge links cysteine 308 with cysteine 341.

This sequence belongs to the peptidase A1 family. Monomer.

The catalysed reaction is Broad specificity similar to that of pepsin A. Clots milk by cleavage of a single 104-Ser-Phe-|-Met-Ala-107 bond in kappa-chain of casein.. Its function is as follows. Chymosin is synthesized in the mucosa of the stomach. The enzyme hydrolyzes casein to paracasein. The protein is Chymosin (CYM) of Ovis aries (Sheep).